Reading from the N-terminus, the 505-residue chain is ATP synthase subunit beta (505 aa).

An ATP-binding site is contributed by 157 to 164 (GGAGVGKT).

This sequence belongs to the ATPase alpha/beta chains family. In terms of assembly, F-type ATPases have 2 components, CF(1) - the catalytic core - and CF(0) - the membrane proton channel. CF(1) has five subunits: alpha(3), beta(3), gamma(1), delta(1), epsilon(1). CF(0) has three main subunits: a(1), b(2) and c(9-12). The alpha and beta chains form an alternating ring which encloses part of the gamma chain. CF(1) is attached to CF(0) by a central stalk formed by the gamma and epsilon chains, while a peripheral stalk is formed by the delta and b chains.

It localises to the cell inner membrane. The catalysed reaction is ATP + H2O + 4 H(+)(in) = ADP + phosphate + 5 H(+)(out). In terms of biological role, produces ATP from ADP in the presence of a proton gradient across the membrane. The catalytic sites are hosted primarily by the beta subunits. This Bacteroides fragilis (strain ATCC 25285 / DSM 2151 / CCUG 4856 / JCM 11019 / LMG 10263 / NCTC 9343 / Onslow / VPI 2553 / EN-2) protein is ATP synthase subunit beta.